A 351-amino-acid polypeptide reads, in one-letter code: Beta-hexosaminidase (351 aa).

Residues Asp-62, Arg-70, Arg-134, and 164-165 (KH) contribute to the substrate site. His-177 serves as the catalytic Proton donor/acceptor. Catalysis depends on Asp-249, which acts as the Nucleophile.

The protein belongs to the glycosyl hydrolase 3 family. NagZ subfamily. In terms of assembly, monomer.

The protein resides in the cytoplasm. The catalysed reaction is Hydrolysis of terminal non-reducing N-acetyl-D-hexosamine residues in N-acetyl-beta-D-hexosaminides.. Its pathway is cell wall biogenesis; peptidoglycan recycling. In terms of biological role, plays a role in peptidoglycan recycling by cleaving the terminal beta-1,4-linked N-acetylglucosamine (GlcNAc) from peptide-linked peptidoglycan fragments, giving rise to free GlcNAc, anhydro-N-acetylmuramic acid and anhydro-N-acetylmuramic acid-linked peptides. This is Beta-hexosaminidase from Pasteurella multocida (strain Pm70).